The primary structure comprises 419 residues: Odorant receptor 56a (419 aa).

The Cytoplasmic segment spans residues 1–41 (MFKVKDLLLSPTTFEDPIFGTHLRYFQWYGYVASKDQNRPL). Residues 42-62 (LSLIRCTILTASIWLSCALML) traverse the membrane as a helical segment. Residues 63–76 (ARVFRGYENLNDGA) are Extracellular-facing. Residues 77–97 (TSYATAVQYFAVSIAMFNAYV) traverse the membrane as a helical segment. At 98–137 (QRDKVISLLRVAHSDIQNLMHEADNREMELLVATQAYTRT) the chain is on the cytoplasmic side. The helical transmembrane segment at 138–158 (ITLLIWIPSVIAGLMAYSDCI) threads the bilayer. Residues 159–196 (YRSLFLPKSVFNVPAVRRGEEHPILLFQLFPFGELCDN) are Extracellular-facing. Residues 197–217 (FVVGYLGPWYALGLGITAIPL) form a helical membrane-spanning segment. Residues 218–292 (WHTFITCLMK…FVQELQYLIC (75 aa)) are Cytoplasmic-facing. A helical transmembrane segment spans residues 293–313 (VPVMADFIIFSVLICFLFFAL). Residues 314–323 (TVGVPSKMDY) are Extracellular-facing. The chain crosses the membrane as a helical span at residues 324–344 (FFMFIYLFVMAGILWIYHWHA). Residues 345-389 (TLIVECHDELSLAYFSCGWYNFEMPLQKMLVFMMMHAQRPMKMRA) are Cytoplasmic-facing. Residues 390–410 (LLVDLNLRTFIDIGRGAYSYF) traverse the membrane as a helical segment. Residues 411–419 (NLLRSSHLY) are Extracellular-facing.

It belongs to the insect chemoreceptor superfamily. Heteromeric odorant receptor channel (TC 1.A.69) family. Or30a subfamily. As to quaternary structure, interacts with Orco. Complexes exist early in the endomembrane system in olfactory sensory neurons (OSNs), coupling these complexes to the conserved ciliary trafficking pathway. Expressed in olfactory sensory neurons in the antenna.

Its subcellular location is the cell membrane. Odorant receptor which mediates acceptance or avoidance behavior, depending on its substrates. The odorant receptor repertoire encodes a large collection of odor stimuli that vary widely in identity, intensity, and duration. May form a complex with Orco to form odorant-sensing units, providing sensitive and prolonged odorant signaling and calcium permeability. Specific receptor for geosmin, a microbial odorant that constitutes an ecologically relevant stimulus that alerts flies to the presence of harmful microbes and induces avoidance behavior. The sequence is that of Odorant receptor 56a (Or56a) from Drosophila melanogaster (Fruit fly).